The following is a 97-amino-acid chain: Large ribosomal subunit protein uL23 (97 aa).

Belongs to the universal ribosomal protein uL23 family. Part of the 50S ribosomal subunit. Contacts protein L29, and trigger factor when it is bound to the ribosome.

One of the early assembly proteins it binds 23S rRNA. One of the proteins that surrounds the polypeptide exit tunnel on the outside of the ribosome. Forms the main docking site for trigger factor binding to the ribosome. This is Large ribosomal subunit protein uL23 from Myxococcus xanthus (strain DK1622).